The following is a 270-amino-acid chain: S-methyl-5'-thioadenosine phosphorylase (270 aa).

Phosphate-binding positions include S16, 58–59, and 91–92; these read RH and SA. 3 cysteine pairs are disulfide-bonded: C138-C205, C200-C262, and C259-C261. M190 lines the substrate pocket. Position 191 (T191) interacts with phosphate. 214–216 provides a ligand contact to substrate; it reads DYD.

It belongs to the PNP/MTAP phosphorylase family. MTAP subfamily. As to quaternary structure, homohexamer. Dimer of a homotrimer.

It carries out the reaction S-methyl-5'-thioadenosine + phosphate = 5-(methylsulfanyl)-alpha-D-ribose 1-phosphate + adenine. It participates in amino-acid biosynthesis; L-methionine biosynthesis via salvage pathway; S-methyl-5-thio-alpha-D-ribose 1-phosphate from S-methyl-5'-thioadenosine (phosphorylase route): step 1/1. In terms of biological role, catalyzes the reversible phosphorylation of S-methyl-5'-thioadenosine (MTA) to adenine and 5-methylthioribose-1-phosphate. Involved in the breakdown of MTA, a major by-product of polyamine biosynthesis. Responsible for the first step in the methionine salvage pathway after MTA has been generated from S-adenosylmethionine. Has broad substrate specificity with 6-aminopurine nucleosides as preferred substrates. The protein is S-methyl-5'-thioadenosine phosphorylase of Saccharolobus solfataricus (strain ATCC 35092 / DSM 1617 / JCM 11322 / P2) (Sulfolobus solfataricus).